Consider the following 99-residue polypeptide: DNA-directed RNA polymerase subunit omega (99 aa).

The protein belongs to the RNA polymerase subunit omega family. As to quaternary structure, the RNAP catalytic core consists of 2 alpha, 1 beta, 1 beta' and 1 omega subunit. When a sigma factor is associated with the core the holoenzyme is formed, which can initiate transcription.

It catalyses the reaction RNA(n) + a ribonucleoside 5'-triphosphate = RNA(n+1) + diphosphate. Its function is as follows. Promotes RNA polymerase assembly. Latches the N- and C-terminal regions of the beta' subunit thereby facilitating its interaction with the beta and alpha subunits. This is DNA-directed RNA polymerase subunit omega from Xanthomonas axonopodis pv. citri (strain 306).